Consider the following 496-residue polypeptide: Aldehyde dehydrogenase (496 aa).

Catalysis depends on residues E263 and C296.

The protein belongs to the aldehyde dehydrogenase family.

The protein resides in the cytoplasm. The catalysed reaction is an aldehyde + NAD(+) + H2O = a carboxylate + NADH + 2 H(+). This Davidiella tassiana (Mycosphaerella tassiana) protein is Aldehyde dehydrogenase (CLAH10).